We begin with the raw amino-acid sequence, 341 residues long: Phosphoribosylformylglycinamidine cyclo-ligase (341 aa).

Belongs to the AIR synthase family.

Its subcellular location is the cytoplasm. It carries out the reaction 2-formamido-N(1)-(5-O-phospho-beta-D-ribosyl)acetamidine + ATP = 5-amino-1-(5-phospho-beta-D-ribosyl)imidazole + ADP + phosphate + H(+). The protein operates within purine metabolism; IMP biosynthesis via de novo pathway; 5-amino-1-(5-phospho-D-ribosyl)imidazole from N(2)-formyl-N(1)-(5-phospho-D-ribosyl)glycinamide: step 2/2. The protein is Phosphoribosylformylglycinamidine cyclo-ligase of Alkaliphilus oremlandii (strain OhILAs) (Clostridium oremlandii (strain OhILAs)).